Reading from the N-terminus, the 942-residue chain is DDB1- and CUL4-associated factor 5 (942 aa).

6 WD repeats span residues 51-91 (GHFG…HSRV), 99-139 (EHHS…LDVF), 140-180 (AHED…HGEP), 185-225 (NYPS…SSLL), 277-317 (FNSC…EAGG), and 331-370 (GHRSIVNQVRFNPHTYMICSSGVEKIIKIWSPYKQPGCTG). Disordered regions lie at residues 449-478 (GVSERSGYTDSESSASLPRSPPPTVDESAD) and 490-509 (TTNTVASTPPTPTCEDAASR). Over residues 454 to 465 (SGYTDSESSASL) the composition is skewed to polar residues. A Phosphothreonine modification is found at Thr-500. Residues Ser-531, Ser-533, Ser-626, Ser-628, Ser-645, Ser-648, and Ser-651 each carry the phosphoserine modification. Disordered stretches follow at residues 544–655 (TDLF…DIES), 676–824 (NNKD…EERS), and 889–942 (ACET…KLKT). Low complexity predominate over residues 625–641 (LSSSPTSSPERSTSTLE). Basic and acidic residues-rich tracts occupy residues 690–701 (DEGRAGTSHKDN) and 728–738 (CSKDTFKEETP). Residues 760–770 (GTSQDTGNSGS) are compositionally biased toward polar residues. Ser-794 carries the post-translational modification Phosphoserine. Residues 801–815 (SGSTLNSGSGNCPRT) show a composition bias toward polar residues.

In terms of assembly, interacts with DDB1, CUL4A or CUL4B. Interacts with L3MBTL3. Interacts with DNMT1. Interacts with E2F1. Interacts with SOX2. Ubiquitous.

It participates in protein modification; protein ubiquitination. Functionally, is a substrate receptor for the CUL4-DDB1 E3 ubiquitin-protein ligase complex (CRL4). The complex CRL4-DCAF5 is involved in the ubiquitination of a set of methylated non-histone proteins, including SOX2, DNMT1 and E2F1. This chain is DDB1- and CUL4-associated factor 5 (DCAF5), found in Homo sapiens (Human).